Reading from the N-terminus, the 181-residue chain is Malignant T-cell-amplified sequence 2 (181 aa).

In terms of domain architecture, PUA spans 92-171; the sequence is LPHQQVDKGA…IGIENIHYLN (80 aa).

Belongs to the MCTS1 family.

The protein localises to the cytoplasm. This is Malignant T-cell-amplified sequence 2 from Mus musculus (Mouse).